A 120-amino-acid polypeptide reads, in one-letter code: NAD(P)H-quinone oxidoreductase subunit 3, chloroplastic (120 aa).

Transmembrane regions (helical) follow at residues Ile-9 to Gly-29, Met-64 to Met-84, and Val-88 to Ser-108.

The protein belongs to the complex I subunit 3 family. As to quaternary structure, NDH is composed of at least 16 different subunits, 5 of which are encoded in the nucleus.

Its subcellular location is the plastid. The protein resides in the chloroplast thylakoid membrane. It carries out the reaction a plastoquinone + NADH + (n+1) H(+)(in) = a plastoquinol + NAD(+) + n H(+)(out). The enzyme catalyses a plastoquinone + NADPH + (n+1) H(+)(in) = a plastoquinol + NADP(+) + n H(+)(out). NDH shuttles electrons from NAD(P)H:plastoquinone, via FMN and iron-sulfur (Fe-S) centers, to quinones in the photosynthetic chain and possibly in a chloroplast respiratory chain. The immediate electron acceptor for the enzyme in this species is believed to be plastoquinone. Couples the redox reaction to proton translocation, and thus conserves the redox energy in a proton gradient. The protein is NAD(P)H-quinone oxidoreductase subunit 3, chloroplastic of Gossypium barbadense (Sea Island cotton).